The chain runs to 617 residues: Pyrophosphate--fructose 6-phosphate 1-phosphotransferase subunit alpha 2 (617 aa).

This sequence belongs to the phosphofructokinase type A (PFKA) family. PPi-dependent PFK group II subfamily. Clade 'Long' sub-subfamily. In terms of assembly, tetramer of two alpha (regulatory) and two beta (catalytic) chains. Expressed in roots and specific parts such as the trichomes of leaves, cotyledon veins, as well as in stamen and gynoecium of flowers.

Its subcellular location is the cytoplasm. It functions in the pathway carbohydrate degradation; glycolysis; D-glyceraldehyde 3-phosphate and glycerone phosphate from D-glucose: step 3/4. Allosterically activated by fructose 2,6-bisphosphate. In terms of biological role, regulatory subunit of pyrophosphate--fructose 6-phosphate 1-phosphotransferase. The sequence is that of Pyrophosphate--fructose 6-phosphate 1-phosphotransferase subunit alpha 2 from Arabidopsis thaliana (Mouse-ear cress).